We begin with the raw amino-acid sequence, 830 residues long: DNA-directed RNA polymerase subunit beta'' (830 aa).

Residues Cys-219, Cys-291, Cys-298, and Cys-301 each contribute to the Zn(2+) site.

This sequence belongs to the RNA polymerase beta' chain family. RpoC2 subfamily. As to quaternary structure, in plastids the minimal PEP RNA polymerase catalytic core is composed of four subunits: alpha, beta, beta', and beta''. When a (nuclear-encoded) sigma factor is associated with the core the holoenzyme is formed, which can initiate transcription. The cofactor is Zn(2+).

The protein resides in the plastid. Its subcellular location is the chloroplast. The enzyme catalyses RNA(n) + a ribonucleoside 5'-triphosphate = RNA(n+1) + diphosphate. DNA-dependent RNA polymerase catalyzes the transcription of DNA into RNA using the four ribonucleoside triphosphates as substrates. The sequence is that of DNA-directed RNA polymerase subunit beta'' (rpoC2) from Euglena gracilis.